The following is a 253-amino-acid chain: Negative modulator of initiation of replication (253 aa).

The tract at residues 66 to 112 (SNQEQQTGHGHAGEPSAVQTPESNDYAKAQPHSSGYQPGQLEGHKSE) is disordered. The tract at residues 154 to 155 (AV) is interaction with DNA.

It belongs to the SeqA family. As to quaternary structure, homodimer. Polymerizes to form helical filaments.

The protein resides in the cytoplasm. Its function is as follows. Negative regulator of replication initiation, which contributes to regulation of DNA replication and ensures that replication initiation occurs exactly once per chromosome per cell cycle. Binds to pairs of hemimethylated GATC sequences in the oriC region, thus preventing assembly of replication proteins and re-initiation at newly replicated origins. Repression is relieved when the region becomes fully methylated. This is Negative modulator of initiation of replication from Shewanella denitrificans (strain OS217 / ATCC BAA-1090 / DSM 15013).